The primary structure comprises 621 residues: Putative acyltransferase plsB1 (621 aa).

Positions 123-128 (HRSYLD) match the HXXXXD motif motif.

This sequence belongs to the GPAT/DAPAT family.

The protein localises to the cell membrane. This chain is Putative acyltransferase plsB1 (plsB1), found in Mycobacterium bovis (strain ATCC BAA-935 / AF2122/97).